We begin with the raw amino-acid sequence, 476 residues long: Glycogen synthase (476 aa).

Position 15 (K15) interacts with ADP-alpha-D-glucose.

It belongs to the glycosyltransferase 1 family. Bacterial/plant glycogen synthase subfamily.

It catalyses the reaction [(1-&gt;4)-alpha-D-glucosyl](n) + ADP-alpha-D-glucose = [(1-&gt;4)-alpha-D-glucosyl](n+1) + ADP + H(+). It functions in the pathway glycan biosynthesis; glycogen biosynthesis. Functionally, synthesizes alpha-1,4-glucan chains using ADP-glucose. The protein is Glycogen synthase (glgA) of Haemophilus influenzae (strain ATCC 51907 / DSM 11121 / KW20 / Rd).